The following is a 93-amino-acid chain: HIG1 domain family member 1A, mitochondrial (93 aa).

Ser2 is modified (N-acetylserine). An HIG1 domain is found at 2–93 (STNTDLSLSS…YQEFWAKRKP (92 aa)). Phosphoserine is present on Ser8. Helical transmembrane passes span 28–48 (PFVPIGMAGFAAIVAYGLYKL) and 69–89 (GFVVGAMTLGMGYSMYQEFWA). The Mitochondrial matrix portion of the chain corresponds to 90 to 93 (KRKP).

In terms of assembly, associates with cytochrome c oxidase (COX, complex IV); proposed complex component. Also associates with respiratory chain supercomplexes. In terms of tissue distribution, expressed in brain and spinal cord.

The protein localises to the mitochondrion membrane. It is found in the mitochondrion inner membrane. Proposed subunit of cytochrome c oxidase (COX, complex IV), which is the terminal component of the mitochondrial respiratory chain that catalyzes the reduction of oxygen to water. May play a role in the assembly of respiratory supercomplexes. The sequence is that of HIG1 domain family member 1A, mitochondrial (Higd1a) from Rattus norvegicus (Rat).